The sequence spans 98 residues: Protein translation factor SUI1 homolog (98 aa).

Belongs to the SUI1 family.

The sequence is that of Protein translation factor SUI1 homolog from Thermococcus kodakarensis (strain ATCC BAA-918 / JCM 12380 / KOD1) (Pyrococcus kodakaraensis (strain KOD1)).